The sequence spans 391 residues: Multidrug resistance protein MdtL (391 aa).

Residues 1 to 3 (MSR) are Cytoplasmic-facing. The helical transmembrane segment at 4 to 24 (FLICSFALVLLYPAGIDMYLV) threads the bilayer. Residues 25 to 41 (GLPRIAADLNASEAQLH) are Periplasmic-facing. The helical transmembrane segment at 42–62 (IAFSVYLAGMAAAMLFAGKVA) threads the bilayer. The Cytoplasmic portion of the chain corresponds to 63 to 68 (DRSGRK). A helical membrane pass occupies residues 69 to 89 (PVAIPGAALFIIASVFCSLAE). Topologically, residues 90-92 (TST) are periplasmic. The chain crosses the membrane as a helical span at residues 93 to 113 (LFLAGRFLQGLGAGCCYVVAF). Residues 114-130 (AILRDTLDDRRRAKVLS) are Cytoplasmic-facing. The helical transmembrane segment at 131 to 151 (LLNGITCIIPVLAPVLGHLIM) threads the bilayer. Residues 152 to 157 (LKFPWQ) are Periplasmic-facing. The chain crosses the membrane as a helical span at residues 158-178 (SLFWTMAIMGIAVLMLSLFIL). Residues 179-198 (KETRPAAPAASDKSRENSES) lie on the Cytoplasmic side of the membrane. The helical transmembrane segment at 199–221 (LLNRFFLSRVVITTLSVSVILTF) threads the bilayer. The Periplasmic portion of the chain corresponds to 222 to 244 (VNTSPVLLMEIMGFERGEYATIM). The helical transmembrane segment at 245-265 (ALTAGVSMTVSFSTPFALGIF) threads the bilayer. The Cytoplasmic segment spans residues 266–268 (KPR). The helical transmembrane segment at 269–289 (TLMITSQVLFLAAGITLAVSP) threads the bilayer. Residues 290 to 292 (SHA) are Periplasmic-facing. The helical transmembrane segment at 293-313 (ISLFGITLICAGFSVGFGVAM) threads the bilayer. Residues 314–330 (SQALGPFSLRAGVASST) are Cytoplasmic-facing. Residues 331 to 351 (LGIAQVCGSSLWIWLAAVVGI) form a helical membrane-spanning segment. Over 352–355 (GAWN) the chain is Periplasmic. The chain crosses the membrane as a helical span at residues 356-376 (MLIGILIACSIVSLLLIMFVA). Residues 377-391 (PGRPVAAHEEIHHHA) lie on the Cytoplasmic side of the membrane.

Belongs to the major facilitator superfamily. DHA1 family. MdtL (TC 2.A.1.2.22) subfamily.

Its subcellular location is the cell inner membrane. This is Multidrug resistance protein MdtL from Shigella dysenteriae serotype 1 (strain Sd197).